The chain runs to 155 residues: Ribonuclease H (155 aa).

One can recognise an RNase H type-1 domain in the interval 1–142 (MLKQVEIFTD…CDELARAAAM (142 aa)). The Mg(2+) site is built by aspartate 10, glutamate 48, aspartate 70, and aspartate 134.

This sequence belongs to the RNase H family. Monomer. The cofactor is Mg(2+).

Its subcellular location is the cytoplasm. The enzyme catalyses Endonucleolytic cleavage to 5'-phosphomonoester.. Its function is as follows. Endonuclease that specifically degrades the RNA of RNA-DNA hybrids. In Escherichia coli O127:H6 (strain E2348/69 / EPEC), this protein is Ribonuclease H.